A 148-amino-acid polypeptide reads, in one-letter code: Large ribosomal subunit protein bL9 (148 aa).

It belongs to the bacterial ribosomal protein bL9 family.

In terms of biological role, binds to the 23S rRNA. The chain is Large ribosomal subunit protein bL9 from Staphylococcus saprophyticus subsp. saprophyticus (strain ATCC 15305 / DSM 20229 / NCIMB 8711 / NCTC 7292 / S-41).